We begin with the raw amino-acid sequence, 285 residues long: K88 fimbrial protein AD (285 aa).

The signal sequence occupies residues 1-21 (MKKTLIALAIAASAASGMAHA).

It belongs to the fimbrial K88 protein family. As to quaternary structure, K88 fimbria, 0.1-1 micrometer in length and 7 nanometers in diameter, is composed of about 100 identical subunits.

It localises to the fimbrium. Functionally, K88 major fimbrial subunit. Fimbriae (also called pili), are polar filaments radiating from the surface of the bacterium to a length of 0.5-1.5 micrometers and numbering 100-300 per cell. They enable bacteria to colonize the epithelium of specific host organs. The polypeptide is K88 fimbrial protein AD (faeG) (Escherichia coli).